A 272-amino-acid chain; its full sequence is Putative phosphoenolpyruvate synthase regulatory protein (272 aa).

ADP is bound at residue 152–159 (GVSRCGKT).

The protein belongs to the pyruvate, phosphate/water dikinase regulatory protein family. PSRP subfamily.

It catalyses the reaction [pyruvate, water dikinase] + ADP = [pyruvate, water dikinase]-phosphate + AMP + H(+). The catalysed reaction is [pyruvate, water dikinase]-phosphate + phosphate + H(+) = [pyruvate, water dikinase] + diphosphate. Its function is as follows. Bifunctional serine/threonine kinase and phosphorylase involved in the regulation of the phosphoenolpyruvate synthase (PEPS) by catalyzing its phosphorylation/dephosphorylation. This chain is Putative phosphoenolpyruvate synthase regulatory protein, found in Pseudomonas putida (strain W619).